Consider the following 369-residue polypeptide: sn-glycerol-3-phosphate import ATP-binding protein UgpC 1 (369 aa).

Residues 4–234 form the ABC transporter domain; it reads ISIRGVKKNY…PVSRFVAGFV (231 aa). Residue 36-43 coordinates ATP; sequence GPSGCGKS.

Belongs to the ABC transporter superfamily. sn-glycerol-3-phosphate importer (TC 3.A.1.1.3) family. As to quaternary structure, the complex is composed of two ATP-binding proteins (UgpC), two transmembrane proteins (UgpA and UgpE) and a solute-binding protein (UgpB).

It localises to the cell inner membrane. It catalyses the reaction sn-glycerol 3-phosphate(out) + ATP + H2O = sn-glycerol 3-phosphate(in) + ADP + phosphate + H(+). Its function is as follows. Part of the ABC transporter complex UgpBAEC involved in sn-glycerol-3-phosphate (G3P) import. Responsible for energy coupling to the transport system. The sequence is that of sn-glycerol-3-phosphate import ATP-binding protein UgpC 1 from Rhizobium johnstonii (strain DSM 114642 / LMG 32736 / 3841) (Rhizobium leguminosarum bv. viciae).